A 1127-amino-acid polypeptide reads, in one-letter code: Disease resistance protein RPS6 (1127 aa).

Met-1 bears the N-acetylmethionine mark. A TIR domain is found at 12-176; sequence WSYHVFPSFS…EIANDILGKM (165 aa). Residue Glu-87 is part of the active site. An NB-ARC domain is found at 191–452; it reads EDHITKMSSL…HIACIFNGEK (262 aa). LRR repeat units follow at residues 197 to 221, 540 to 563, 587 to 609, 610 to 632, 633 to 656, 658 to 679, 680 to 704, 766 to 790, 791 to 813, 814 to 834, and 835 to 857; these read MSSL…GIGK, IDET…LFLK, PSRL…NFHP, ENLV…VHSL, AGLR…SMAT, LETL…IQYL, NKLN…NLKS, SPTL…IQNL, YQLE…GINL, DSLI…PDIS, and TNIS…IEKL.

As to quaternary structure, interacts with EDS1. As to expression, ubiquitous.

It catalyses the reaction NAD(+) + H2O = ADP-D-ribose + nicotinamide + H(+). Functionally, disease resistance (R) protein that specifically recognizes the hopA1 type III effector avirulence protein from Pseudomonas syringae. Resistance proteins guard the plant against pathogens that contain an appropriate avirulence protein via an indirect interaction with this avirulence protein. That triggers a defense system including the hypersensitive response, which restricts the pathogen growth. The polypeptide is Disease resistance protein RPS6 (RPS6) (Arabidopsis thaliana (Mouse-ear cress)).